The chain runs to 177 residues: NAD(P)H-quinone oxidoreductase subunit 6, chloroplastic (177 aa).

Helical transmembrane passes span Ile-10 to Thr-30, Pro-32 to Pro-52, Ala-61 to Met-81, Leu-92 to Ile-112, and Phe-152 to Ala-172.

Belongs to the complex I subunit 6 family. NDH is composed of at least 16 different subunits, 5 of which are encoded in the nucleus.

The protein resides in the plastid. Its subcellular location is the chloroplast thylakoid membrane. It carries out the reaction a plastoquinone + NADH + (n+1) H(+)(in) = a plastoquinol + NAD(+) + n H(+)(out). The catalysed reaction is a plastoquinone + NADPH + (n+1) H(+)(in) = a plastoquinol + NADP(+) + n H(+)(out). NDH shuttles electrons from NAD(P)H:plastoquinone, via FMN and iron-sulfur (Fe-S) centers, to quinones in the photosynthetic chain and possibly in a chloroplast respiratory chain. The immediate electron acceptor for the enzyme in this species is believed to be plastoquinone. Couples the redox reaction to proton translocation, and thus conserves the redox energy in a proton gradient. This is NAD(P)H-quinone oxidoreductase subunit 6, chloroplastic (ndhG) from Illicium oligandrum (Star anise).